A 190-amino-acid chain; its full sequence is Selenoprotein S (190 aa).

The chain crosses the membrane as a helical span at residues 28-48 (SLLASYGWYILFSCILLYIVI). The VCP/p97-interacting motif (VIM) stretch occupies residues 78 to 90 (RQEALAAARLRMQ). The tract at residues 115 to 190 (KIEMWDSMQE…RRGPSSGGUN (76 aa)) is disordered. A compositionally biased stretch (gly residues) spans 160-174 (RGGGYNPLTGEGGGT). Position 189 (Sec189) is a non-standard amino acid, selenocysteine.

The protein belongs to the selenoprotein S family. In terms of assembly, interacts with DERL1 and (via VIM motif) with VCP, suggesting that it forms a membrane complex with DERL1 that serves as a receptor for VCP. Also interacts with DERL2, DERL3 and SELENOK. The SELENOK-SELENOS complex interacts with VCP. Interacts with CCDC47. In terms of processing, truncated SELENOS proteins produced by failed UGA/Sec decoding are ubiquitinated by the CRL2(KLHDC2) and CRL2(KLHDC3) complexes, which recognizes the glycine (Gly) at the C-terminus of truncated SELENOS proteins. Truncated SELENOS proteins produced by failed UGA/Sec decoding are also ubiquitinated by the CRL5(KLHDC1) complex.

It localises to the endoplasmic reticulum membrane. The protein resides in the cytoplasm. In terms of biological role, involved in the degradation process of misfolded endoplasmic reticulum (ER) luminal proteins. Participates in the transfer of misfolded proteins from the ER to the cytosol, where they are destroyed by the proteasome in a ubiquitin-dependent manner. Probably acts by serving as a linker between DERL1, which mediates the retrotranslocation of misfolded proteins into the cytosol, and the ATPase complex VCP, which mediates the translocation and ubiquitination. The chain is Selenoprotein S from Mus musculus (Mouse).